We begin with the raw amino-acid sequence, 165 residues long: V-type proton ATPase 16 kDa proteolipid subunit (165 aa).

Residues 1–10 (MSSVFSGDET) lie on the Lumenal side of the membrane. A helical membrane pass occupies residues 11-33 (APFFGFLGAASALIFSCMGAAYG). Residues 34 to 55 (TAKSGVGVASMGVMRPELVMKS) lie on the Cytoplasmic side of the membrane. A helical membrane pass occupies residues 56 to 76 (IVPVVMAGVLGIYGLIIAVII). Over 77–95 (STGINPKAKPYYLFDGYAH) the chain is Lumenal. The helical transmembrane segment at 96–117 (LSSGLACGLAGLAAGMAIGIVG) threads the bilayer. The Cytoplasmic portion of the chain corresponds to 118 to 129 (DAGVRANAQQPK). Residues 130-155 (LFVGMILILIFAEALALYGLIVGIIL) traverse the membrane as a helical segment. Over 156 to 165 (SSRAGQSRAD) the chain is Lumenal.

It belongs to the V-ATPase proteolipid subunit family. V-ATPase is a heteromultimeric enzyme composed of a peripheral catalytic V1 complex (main components: subunits A, B, C, D, E, and F) attached to an integral membrane V0 proton pore complex (main component: the proteolipid protein; which is present as a hexamer that forms the proton-conducting pore).

The protein resides in the vacuole membrane. Its function is as follows. Proton-conducting pore forming subunit of the membrane integral V0 complex of vacuolar ATPase. V-ATPase is responsible for acidifying a variety of intracellular compartments in eukaryotic cells. In Oryza sativa subsp. indica (Rice), this protein is V-type proton ATPase 16 kDa proteolipid subunit (VATP-P1).